The primary structure comprises 316 residues: Protein YIPF2 (316 aa).

At Ala2 the chain carries N-acetylalanine. Over 2–124 the chain is Cytoplasmic; it reads ASADELTFHE…LRNRPDLYGP (123 aa). Positions 16–37 are disordered; the sequence is TNLLADTPDAATTSRSDQLTPQ. Residues 25-36 are compositionally biased toward polar residues; the sequence is AATTSRSDQLTP. The chain crosses the membrane as a helical span at residues 125–145; that stretch reads FWICATLAFVLAVTGNLTLVL. The Lumenal portion of the chain corresponds to 146 to 163; sequence AQRRDPSIHYSPQFHKVT. Residues 164-184 form a helical membrane-spanning segment; sequence VAGISIYCYAWLVPLALWGFL. Topologically, residues 185 to 196 are cytoplasmic; the sequence is RWRKGVQERMGP. Residues 197–219 form a helical membrane-spanning segment; that stretch reads YTFLETVCIYGYSLFVFIPMVVL. Residues 220–231 lie on the Lumenal side of the membrane; sequence WLIPVPWLQWLF. A helical membrane pass occupies residues 232–252; that stretch reads GALALGLSAAGLVFTLWPVVR. The Cytoplasmic portion of the chain corresponds to 253-256; that stretch reads EDTR. A helical membrane pass occupies residues 257-277; it reads LVATVLLSVVVLLHALLAMGC. Residues 278-316 are Lumenal-facing; that stretch reads KLYFFQSLPPENVAPPPQITSLPSNIALSPTLPQSLAPS.

Belongs to the YIP1 family. In terms of assembly, interacts with YIPF6; this interaction may stabilize YIPF2. May also form a ternary complex with YIPF1 and YIPF6.

Its subcellular location is the golgi apparatus. The protein resides in the cis-Golgi network membrane. The protein localises to the trans-Golgi network membrane. It localises to the late endosome membrane. The protein is Protein YIPF2 (YIPF2) of Homo sapiens (Human).